We begin with the raw amino-acid sequence, 432 residues long: 3-phosphoshikimate 1-carboxyvinyltransferase (432 aa).

3-phosphoshikimate is bound by residues Lys23, Ser24, and Arg28. Lys23 is a binding site for phosphoenolpyruvate. 2 residues coordinate phosphoenolpyruvate: Gly95 and Arg123. 3-phosphoshikimate-binding residues include Ser167, Gln169, Asp317, and Lys344. Gln169 contacts phosphoenolpyruvate. Asp317 serves as the catalytic Proton acceptor. Positions 348 and 390 each coordinate phosphoenolpyruvate.

This sequence belongs to the EPSP synthase family. As to quaternary structure, monomer.

The protein resides in the cytoplasm. The catalysed reaction is 3-phosphoshikimate + phosphoenolpyruvate = 5-O-(1-carboxyvinyl)-3-phosphoshikimate + phosphate. It participates in metabolic intermediate biosynthesis; chorismate biosynthesis; chorismate from D-erythrose 4-phosphate and phosphoenolpyruvate: step 6/7. Its function is as follows. Catalyzes the transfer of the enolpyruvyl moiety of phosphoenolpyruvate (PEP) to the 5-hydroxyl of shikimate-3-phosphate (S3P) to produce enolpyruvyl shikimate-3-phosphate and inorganic phosphate. This is 3-phosphoshikimate 1-carboxyvinyltransferase from Staphylococcus carnosus (strain TM300).